Consider the following 441-residue polypeptide: 3-phosphoshikimate 1-carboxyvinyltransferase (441 aa).

The disordered stretch occupies residues 1–21 (MSANGPSHPARELKAGGSLSG). 3 residues coordinate 3-phosphoshikimate: K29, S30, and R34. K29 is a binding site for phosphoenolpyruvate. Residues G103 and R132 each contribute to the phosphoenolpyruvate site. Residues S177, Q179, D328, and K355 each contribute to the 3-phosphoshikimate site. Q179 contacts phosphoenolpyruvate. D328 functions as the Proton acceptor in the catalytic mechanism. Residues R359 and R401 each contribute to the phosphoenolpyruvate site.

This sequence belongs to the EPSP synthase family. In terms of assembly, monomer.

It localises to the cytoplasm. It carries out the reaction 3-phosphoshikimate + phosphoenolpyruvate = 5-O-(1-carboxyvinyl)-3-phosphoshikimate + phosphate. The protein operates within metabolic intermediate biosynthesis; chorismate biosynthesis; chorismate from D-erythrose 4-phosphate and phosphoenolpyruvate: step 6/7. Functionally, catalyzes the transfer of the enolpyruvyl moiety of phosphoenolpyruvate (PEP) to the 5-hydroxyl of shikimate-3-phosphate (S3P) to produce enolpyruvyl shikimate-3-phosphate and inorganic phosphate. This chain is 3-phosphoshikimate 1-carboxyvinyltransferase, found in Parasynechococcus marenigrum (strain WH8102).